A 66-amino-acid polypeptide reads, in one-letter code: uncharacterized protein (66 aa).

The next 2 helical transmembrane spans lie at 4–24 (ALFI…LLIF) and 38–58 (LLTP…ILVL).

It localises to the membrane. This is an uncharacterized protein from Saccharomyces cerevisiae (strain ATCC 204508 / S288c) (Baker's yeast).